The following is a 696-amino-acid chain: Carotenoid dioxygenase carX (696 aa).

Polar residues predominate over residues 1 to 16 (MKFLQQNSFTQTSMSQ). Positions 1-27 (MKFLQQNSFTQTSMSQPHEDVSPPLRH) are disordered. Fe(2+) is bound by residues His244, His298, His361, and His642.

Belongs to the carotenoid oxygenase family. The cofactor is Fe(2+).

It catalyses the reaction all-trans-beta-carotene + O2 = 2 all-trans-retinal. Its pathway is carotenoid biosynthesis. Its function is as follows. Carotenoid dioxygenase; part of the car gene cluster that mediates the biosynthesis of neurosporaxanthin, a carboxylic apocarotenoid acting as an essential protective pigments and leading to orange pigmentation. CarX mediates the cleavage of beta-carotene produced by carAR into retinal, the rhodopsin's chromophore that is involved in the regulation of the carotenoid biosynthetic pathway via a negative feedback mechanism. It can also convert the synthetic compound beta-apo-8'-carotenal but not C35-apocarotenoids such as the acidic apocarotenoid neurosporaxanthin (C35), as well as its corresponding aldehyde beta-apo-4'-carotenal. In Gibberella fujikuroi (strain CBS 195.34 / IMI 58289 / NRRL A-6831) (Bakanae and foot rot disease fungus), this protein is Carotenoid dioxygenase carX.